Here is a 501-residue protein sequence, read N- to C-terminus: Bifunctional purine biosynthesis protein PurH (501 aa).

In terms of domain architecture, MGS-like spans 1–144; that stretch reads MKKRALISVF…KNFQDVVVIS (144 aa).

The protein belongs to the PurH family.

It catalyses the reaction (6R)-10-formyltetrahydrofolate + 5-amino-1-(5-phospho-beta-D-ribosyl)imidazole-4-carboxamide = 5-formamido-1-(5-phospho-D-ribosyl)imidazole-4-carboxamide + (6S)-5,6,7,8-tetrahydrofolate. The catalysed reaction is IMP + H2O = 5-formamido-1-(5-phospho-D-ribosyl)imidazole-4-carboxamide. The protein operates within purine metabolism; IMP biosynthesis via de novo pathway; 5-formamido-1-(5-phospho-D-ribosyl)imidazole-4-carboxamide from 5-amino-1-(5-phospho-D-ribosyl)imidazole-4-carboxamide (10-formyl THF route): step 1/1. It participates in purine metabolism; IMP biosynthesis via de novo pathway; IMP from 5-formamido-1-(5-phospho-D-ribosyl)imidazole-4-carboxamide: step 1/1. In Clostridium botulinum (strain Eklund 17B / Type B), this protein is Bifunctional purine biosynthesis protein PurH.